Consider the following 577-residue polypeptide: BICD family-like cargo adapter 1 (577 aa).

The disordered stretch occupies residues 63-100 (LLAAGERSSEPGEHPQAEPESPVEGHGPPLPPPPTQDP). A compositionally biased stretch (basic and acidic residues) spans 69-79 (RSSEPGEHPQA). A CC1 box motif is present at residues 116 to 120 (AARLG). Positions 121-379 (KALLERNQDM…QLWEAYCQVR (259 aa)) form a coiled coil. The tract at residues 389–415 (DSADSAVSTDSSMDESSETSSAKDVPA) is disordered. The segment covering 390-399 (SADSAVSTDS) has biased composition (low complexity). Positions 443–528 (LSVEMTALKE…LEAWQDDMHR (86 aa)) form a coiled coil.

It belongs to the BICDR family. Part of a tripartite complex with dynein and dynactin, acts an adapter linking the dynein motor complex and dynactin. Interacts with KIF1C. Interacts with RAB6A and RAB6B; interaction is specific to Rab6. In terms of tissue distribution, highly expressed during early embryonic development. Predominantly expressed in kidney, undifferentiated neural tissue and developing eye.

Its subcellular location is the cytoplasm. It localises to the cytoskeleton. The protein resides in the microtubule organizing center. The protein localises to the centrosome. In terms of biological role, acts as an adapter protein linking the dynein motor complex to various cargos and converts dynein from a non-processive to a highly processive motor in the presence of dynactin. Facilitates the interaction between dynein and dynactin and activates dynein processivity (the ability to move along a microtubule for a long distance without falling off the track). Predominantly recruits 2 dyneins, which increases both the force and speed of the microtubule motor. Component of secretory vesicle machinery in developing neurons that acts as a regulator of neurite outgrowth. Regulates the secretory vesicle transport by controlling the accumulation of Rab6-containing secretory vesicles in the pericentrosomal region restricting anterograde secretory transport during the early phase of neuronal differentiation, thereby inhibiting neuritogenesis. This chain is BICD family-like cargo adapter 1 (Bicdl1), found in Mus musculus (Mouse).